The sequence spans 842 residues: MPLSYQHFRKLLLLDDEAGPLEEELPRLADEDLNRRVAEDLNLGNLNVSIPWTHKVGNFTGLYSSTVPVFNPEWQTPSFPHIHLQEDIINRCQQYVGPLTVNEKRRLKLIMPARFYPKLTKYLPLDKGIKPYYPEHAVNHYFKTRHYLHTLWKAGILYKRETTRSASFCGSPYSWEQELQHGRLVFQTSTRHGDESFCSQSSGILSRSPVGPCVRSQLKQSRLGLQPQQGSLARGKSGRSGSIRARVPPTTRRSFGVEPSGSGHIDNRASSTSSCLHQSAVRKTAYSHLSTSKRQSSSGHAVELHHISPSPARSQSEGPIFSSWWLQFRNSKPCSDYCLTHIVNLLEDWGPCTEHGEHNIRIPRTPARVTGGVFLVDKNPHNTTESRLVVDFSQFSRGSTHVSWPKFAVPNLQSLTNLLSSNLSWLSLDVSAAFYHIPLHPAAMPHLLVGSSGLPRYVARLSSTSRNINHQHGTMQDLHDSCSRNLYVSLLLLYKTFGRKLHLYSHPIILGFRKIPMGGGLSPFLLAQFTSAICSVVRRAFPHCLAFSYMDDVVLGAKSVQHLESLFTSITNFLLSLGIHLNPNKTKRWGYSLNFMGYVIGSWGTLPQEHIVLKIKQCFRKLPVNRPIDWKVCQRIVGLLGFAAPFTQCGYPALMPLYACIQSKQAFTFSPTYKAFLCKQYLHLYPVARRTALCQVFADATPTGWGLAIGHRRMRGTFVAPLPIHTAELLAACFARSRSGAKLIGTDNSVVLSRKYTSFPWLLGCAANWILRGTYFVYVPSALNPADDPSRGRLGLIRPLLHLRFRPTTGRTSLYAVSPSVPSHLPDRVHFASPLHVAWRPP.

Residues 1-177 (MPLSYQHFRK…FCGSPYSWEQ (177 aa)) are terminal protein domain (TP). The interval 178-346 (ELQHGRLVFQ…YCLTHIVNLL (169 aa)) is spacer. Residues 218–274 (LKQSRLGLQPQQGSLARGKSGRSGSIRARVPPTTRRSFGVEPSGSGHIDNRASSTSS) are disordered. Residues 347-690 (EDWGPCTEHG…YLHLYPVARR (344 aa)) form a polymerase/reverse transcriptase domain (RT) region. Residues 357–600 (EHNIRIPRTP…YSLNFMGYVI (244 aa)) form the Reverse transcriptase domain. Aspartate 429, aspartate 551, and aspartate 552 together coordinate Mg(2+).

Belongs to the hepadnaviridae P protein family.

The enzyme catalyses DNA(n) + a 2'-deoxyribonucleoside 5'-triphosphate = DNA(n+1) + diphosphate. It carries out the reaction Endonucleolytic cleavage to 5'-phosphomonoester.. Its activity is regulated as follows. Activated by host HSP70 and HSP40 in vitro to be able to bind the epsilon loop of the pgRNA. Because deletion of the RNase H region renders the protein partly chaperone-independent, the chaperones may be needed indirectly to relieve occlusion of the RNA-binding site by this domain. Inhibited by several reverse-transcriptase inhibitors: Lamivudine, Adefovir and Entecavir. In terms of biological role, multifunctional enzyme that converts the viral RNA genome into dsDNA in viral cytoplasmic capsids. This enzyme displays a DNA polymerase activity that can copy either DNA or RNA templates, and a ribonuclease H (RNase H) activity that cleaves the RNA strand of RNA-DNA heteroduplexes in a partially processive 3'- to 5'-endonucleasic mode. Neo-synthesized pregenomic RNA (pgRNA) are encapsidated together with the P protein, and reverse-transcribed inside the nucleocapsid. Initiation of reverse-transcription occurs first by binding the epsilon loop on the pgRNA genome, and is initiated by protein priming, thereby the 5'-end of (-)DNA is covalently linked to P protein. Partial (+)DNA is synthesized from the (-)DNA template and generates the relaxed circular DNA (RC-DNA) genome. After budding and infection, the RC-DNA migrates in the nucleus, and is converted into a plasmid-like covalently closed circular DNA (cccDNA). The activity of P protein does not seem to be necessary for cccDNA generation, and is presumably released from (+)DNA by host nuclear DNA repair machinery. The protein is Protein P of Hepatitis B virus genotype C subtype adr (isolate Korea/Kim/1989) (HBV-C).